The primary structure comprises 56 residues: Large ribosomal subunit protein bL33c (56 aa).

This sequence belongs to the bacterial ribosomal protein bL33 family.

It localises to the plastid. Its subcellular location is the chloroplast. This Rhodomonas salina (Cryptomonas salina) protein is Large ribosomal subunit protein bL33c.